Here is a 261-residue protein sequence, read N- to C-terminus: (R)-S-adenosyl-L-methionine hydrolase (261 aa).

3 residues coordinate adenosine: aspartate 12, aspartate 72, and asparagine 187. Residues asparagine 187, serine 231, and valine 239 each contribute to the (R)-S-adenosyl-L-methionine site. Valine 239 is a binding site for adenosine.

The protein belongs to the SAM hydrolase / SAM-dependent halogenase family.

It catalyses the reaction (R)-S-adenosyl-L-methionine + H2O = adenosine + L-methionine + H(+). Its function is as follows. Specifically hydrolyzes (R)-S-adenosyl-L-methionine ((R)-SAM), the inactive form of the ubiquitous cofactor SAM, into adenosine and L-methionine. Is stereoselective as it cannot use the active form of SAM, (S)-S-adenosyl-L-methionine, as substrate. Likely plays a role in preventing accumulation of (R)-S-adenosyl-L-methionine in cells; maintenance of (S)-S-denosyl-L-methionine homochirality is important for cellular health given that the (R)-form is largely inactive as a methyl donor and can function as an inhibitor of methyltransferases. In Salinispora tropica (strain ATCC BAA-916 / DSM 44818 / JCM 13857 / NBRC 105044 / CNB-440), this protein is (R)-S-adenosyl-L-methionine hydrolase.